The following is a 1025-amino-acid chain: Exocyst complex component 6 (1025 aa).

2 stretches are compositionally biased toward basic and acidic residues: residues M1 to I10 and M22 to K52. Disordered stretches follow at residues M1–L122, L135–K154, and Q666–E691. Residues L19–A68 adopt a coiled-coil conformation. The segment covering S71–D93 has biased composition (low complexity). The segment covering S104–Q118 has biased composition (polar residues). Low complexity-rich tracts occupy residues L135–S147 and Q666–N677. Residues N678 to E691 show a composition bias toward acidic residues.

Belongs to the SEC15 family. In terms of assembly, the exocyst complex is composed of sec3/exoc1, sec5/exoc2, sec6/exoc3, sec8/exoc4, sec10/exoc5, sec15/exoc6, exo70/exoc7 and exo84/exoc8.

It localises to the cytoplasm. It is found in the perinuclear region. The protein localises to the midbody. Its subcellular location is the midbody ring. Component of the exocyst complex involved in the docking of exocytic vesicles with fusion sites on the plasma membrane. The sequence is that of Exocyst complex component 6 (exoc6) from Dictyostelium discoideum (Social amoeba).